Reading from the N-terminus, the 290-residue chain is UPF0507 protein YML003W (290 aa).

It belongs to the UPF0507 family.

The protein is UPF0507 protein YML003W of Saccharomyces cerevisiae (strain ATCC 204508 / S288c) (Baker's yeast).